A 131-amino-acid chain; its full sequence is Large ribosomal subunit protein eL32 (131 aa).

A disordered region spans residues 39-77; sequence LGEKWRRPKGRHSKMRRKLKSKPKMPNPGYGSPKKVRGL. Basic residues predominate over residues 44-61; it reads RRPKGRHSKMRRKLKSKP.

It belongs to the eukaryotic ribosomal protein eL32 family.

This chain is Large ribosomal subunit protein eL32 (rpl32), found in Methanopyrus kandleri (strain AV19 / DSM 6324 / JCM 9639 / NBRC 100938).